The following is a 201-amino-acid chain: Small ribosomal subunit protein uS4c (201 aa).

The tract at residues 23–42 is disordered; sequence SKKPRAGSNLRNQLRPGKKS. One can recognise an S4 RNA-binding domain in the interval 89–151; the sequence is MRLDNILFRL…QKSKSLVQNY (63 aa).

The protein belongs to the universal ribosomal protein uS4 family. As to quaternary structure, part of the 30S ribosomal subunit. Contacts protein S5. The interaction surface between S4 and S5 is involved in control of translational fidelity.

The protein resides in the plastid. The protein localises to the chloroplast. One of the primary rRNA binding proteins, it binds directly to 16S rRNA where it nucleates assembly of the body of the 30S subunit. Functionally, with S5 and S12 plays an important role in translational accuracy. The sequence is that of Small ribosomal subunit protein uS4c (rps4) from Morus indica (Mulberry).